The sequence spans 437 residues: Methionine aminopeptidase 2 (437 aa).

The segment at Met1–Gly90 is disordered. Positions Glu10 to Lys20 are enriched in basic and acidic residues. A compositionally biased stretch (acidic residues) spans Ser31–Glu42. Positions Ala52–Ala66 are enriched in basic residues. His190 serves as a coordination point for substrate. Positions 210, 221, and 290 each coordinate a divalent metal cation. His298 serves as a coordination point for substrate. A divalent metal cation is bound by residues Glu323 and Glu418.

This sequence belongs to the peptidase M24A family. Methionine aminopeptidase eukaryotic type 2 subfamily. The cofactor is Co(2+). It depends on Zn(2+) as a cofactor. Requires Mn(2+) as cofactor. Fe(2+) serves as cofactor.

Its subcellular location is the cytoplasm. It catalyses the reaction Release of N-terminal amino acids, preferentially methionine, from peptides and arylamides.. Its function is as follows. Cotranslationally removes the N-terminal methionine from nascent proteins. The N-terminal methionine is often cleaved when the second residue in the primary sequence is small and uncharged (Met-Ala-, Cys, Gly, Pro, Ser, Thr, or Val). This Neurospora crassa (strain ATCC 24698 / 74-OR23-1A / CBS 708.71 / DSM 1257 / FGSC 987) protein is Methionine aminopeptidase 2.